Here is a 122-residue protein sequence, read N- to C-terminus: Large ribosomal subunit protein uL14 (122 aa).

This sequence belongs to the universal ribosomal protein uL14 family. As to quaternary structure, part of the 50S ribosomal subunit. Forms a cluster with proteins L3 and L19. In the 70S ribosome, L14 and L19 interact and together make contacts with the 16S rRNA in bridges B5 and B8.

Binds to 23S rRNA. Forms part of two intersubunit bridges in the 70S ribosome. In Bacillus licheniformis (strain ATCC 14580 / DSM 13 / JCM 2505 / CCUG 7422 / NBRC 12200 / NCIMB 9375 / NCTC 10341 / NRRL NRS-1264 / Gibson 46), this protein is Large ribosomal subunit protein uL14.